Reading from the N-terminus, the 99-residue chain is Aspartyl/glutamyl-tRNA(Asn/Gln) amidotransferase subunit C (99 aa).

The protein belongs to the GatC family. In terms of assembly, heterotrimer of A, B and C subunits.

The enzyme catalyses L-glutamyl-tRNA(Gln) + L-glutamine + ATP + H2O = L-glutaminyl-tRNA(Gln) + L-glutamate + ADP + phosphate + H(+). The catalysed reaction is L-aspartyl-tRNA(Asn) + L-glutamine + ATP + H2O = L-asparaginyl-tRNA(Asn) + L-glutamate + ADP + phosphate + 2 H(+). Allows the formation of correctly charged Asn-tRNA(Asn) or Gln-tRNA(Gln) through the transamidation of misacylated Asp-tRNA(Asn) or Glu-tRNA(Gln) in organisms which lack either or both of asparaginyl-tRNA or glutaminyl-tRNA synthetases. The reaction takes place in the presence of glutamine and ATP through an activated phospho-Asp-tRNA(Asn) or phospho-Glu-tRNA(Gln). The polypeptide is Aspartyl/glutamyl-tRNA(Asn/Gln) amidotransferase subunit C (Cupriavidus taiwanensis (strain DSM 17343 / BCRC 17206 / CCUG 44338 / CIP 107171 / LMG 19424 / R1) (Ralstonia taiwanensis (strain LMG 19424))).